The following is a 116-amino-acid chain: uncharacterized protein (116 aa).

The disordered stretch occupies residues 64 to 116 (RRFYSGTVNRNARSAGAASRSTSSVKRPLESKKRNARPETEKWCASYSAGNRR). Low complexity predominate over residues 73-87 (RNARSAGAASRSTSS). Over residues 90 to 105 (RPLESKKRNARPETEK) the composition is skewed to basic and acidic residues.

This is an uncharacterized protein from Saccharomyces cerevisiae (strain ATCC 204508 / S288c) (Baker's yeast).